The sequence spans 96 residues: CRISPR-associated endoribonuclease Cas2 (96 aa).

Asp-8 is a Mg(2+) binding site.

The protein belongs to the CRISPR-associated endoribonuclease Cas2 protein family. In terms of assembly, homodimer, forms a heterotetramer with a Cas1 homodimer. Mg(2+) is required as a cofactor.

CRISPR (clustered regularly interspaced short palindromic repeat), is an adaptive immune system that provides protection against mobile genetic elements (viruses, transposable elements and conjugative plasmids). CRISPR clusters contain sequences complementary to antecedent mobile elements and target invading nucleic acids. CRISPR clusters are transcribed and processed into CRISPR RNA (crRNA). Functions as a ssRNA-specific endoribonuclease. Involved in the integration of spacer DNA into the CRISPR cassette. In Chlorobaculum tepidum (strain ATCC 49652 / DSM 12025 / NBRC 103806 / TLS) (Chlorobium tepidum), this protein is CRISPR-associated endoribonuclease Cas2.